Here is a 514-residue protein sequence, read N- to C-terminus: Cytochrome P450 94A1 (514 aa).

Residues 7-29 (EVLLPYLLPLLLLILPTTIFFLT) form a helical membrane-spanning segment. Residue Cys458 participates in heme binding.

Belongs to the cytochrome P450 family. Heme serves as cofactor.

It is found in the endoplasmic reticulum membrane. In terms of biological role, catalyzes the omega-hydroxylation of various fatty acids (FA) from 10 to 18 carbon atoms. The substrate specificity is higher for laurate &gt; palmitate &gt; myristate &gt; linolenate &gt; linoleate &gt; oleate &gt; caprate. May play a minor role in cutin synthesis and could be involved in plant defense. This is Cytochrome P450 94A1 (CYP94A1) from Vicia sativa (Spring vetch).